The sequence spans 514 residues: Cytochrome bd-II ubiquinol oxidase subunit 1 (514 aa).

The Cytoplasmic segment spans residues 1–22 (MWDVIDLSRWQFALTALYHFLF). H19 contributes to the heme binding site. The helical transmembrane segment at 23-42 (VPLTLGLIFLLAIMETIYVV) threads the bilayer. Residues 43 to 94 (TGKTIYRDMTRFWGKLFGINFALGVATGLTMEFQFGTNWSFYSNYVGDIFGA) lie on the Periplasmic side of the membrane. Residues 95 to 114 (PLAMEALMAFFLESTFVGLF) traverse the membrane as a helical segment. Residues 115-129 (FFGWQRLNKYQHLLV) lie on the Cytoplasmic side of the membrane. Residues 130 to 149 (TWLVAFGSNLSALWILNANG) form a helical membrane-spanning segment. At 150–187 (WMQYPTGAHFDIDTLRMEMTSFSELVFNPVSQVKFVHT) the chain is on the periplasmic side. H186 provides a ligand contact to heme. Residues 188 to 207 (VMAGYVTGAMFIMAISAWYL) traverse the membrane as a helical segment. Topologically, residues 208–219 (LRGRERNVALRS) are cytoplasmic. The chain crosses the membrane as a helical span at residues 220–239 (FAIGSVFGTLAIIGTLQLGD). The Periplasmic segment spans residues 240–392 (SSAYEVAQVQ…VAPVFWSFRI (153 aa)). M393 provides a ligand contact to heme. Residues 393 to 412 (MVGCGSLLLLVMLIALVQTL) form a helical membrane-spanning segment. Residues 413-470 (RGKIDQHRWVLKMALWSLPLPWIAIEAGWFMTEFGRQPWAIQDILPTYSAHSALTTGQ) lie on the Cytoplasmic side of the membrane. Residues 471 to 490 (LAFSLIMIVGLYTLFLIAEV) traverse the membrane as a helical segment. Topologically, residues 491–514 (YLMQKYARLGPSAMQSEQPTQQQG) are periplasmic.

Belongs to the cytochrome ubiquinol oxidase subunit 1 family. In terms of assembly, heterodimer of subunits I and II. The cofactor is heme. The N-terminus is blocked.

Its subcellular location is the cell inner membrane. It catalyses the reaction 2 a ubiquinol + O2 + n H(+)(in) = 2 a ubiquinone + 2 H2O + n H(+)(out). Its pathway is energy metabolism; oxidative phosphorylation. With respect to regulation, inhibited by cyanide; is more sensitive to cyanide than cytochrome bd-I oxidase. Its function is as follows. A terminal oxidase that catalyzes quinol-dependent, Na(+)-independent oxygen uptake. Prefers menadiol over other quinols although ubiquinol was not tested. Generates a proton motive force using protons and electrons from opposite sides of the membrane to generate H(2)O, transferring 1 proton/electron. In Escherichia coli (strain K12), this protein is Cytochrome bd-II ubiquinol oxidase subunit 1 (appC).